The sequence spans 376 residues: Succinate--CoA ligase [ADP-forming] subunit beta (376 aa).

The ATP-grasp domain occupies 9–237 (KEIFSKYGIP…PTEEEKVEAD (229 aa)). Residues lysine 46, 53-55 (GRG), valine 95, and glutamate 100 each bind ATP. 2 residues coordinate Mg(2+): asparagine 192 and aspartate 206. Substrate is bound by residues asparagine 257 and 314 to 316 (GIT).

Belongs to the succinate/malate CoA ligase beta subunit family. Heterotetramer of two alpha and two beta subunits. The cofactor is Mg(2+).

The catalysed reaction is succinate + ATP + CoA = succinyl-CoA + ADP + phosphate. It carries out the reaction GTP + succinate + CoA = succinyl-CoA + GDP + phosphate. It participates in carbohydrate metabolism; tricarboxylic acid cycle; succinate from succinyl-CoA (ligase route): step 1/1. Its function is as follows. Succinyl-CoA synthetase functions in the citric acid cycle (TCA), coupling the hydrolysis of succinyl-CoA to the synthesis of either ATP or GTP and thus represents the only step of substrate-level phosphorylation in the TCA. The beta subunit provides nucleotide specificity of the enzyme and binds the substrate succinate, while the binding sites for coenzyme A and phosphate are found in the alpha subunit. In Bacteroides thetaiotaomicron (strain ATCC 29148 / DSM 2079 / JCM 5827 / CCUG 10774 / NCTC 10582 / VPI-5482 / E50), this protein is Succinate--CoA ligase [ADP-forming] subunit beta.